The chain runs to 773 residues: Leucine-rich repeat and calponin homology domain-containing protein 2 (773 aa).

The segment at 1-46 (MAASQGGGGNSGGGGCSGGGSGGGGGAAGGGGGGGGGGGGGAGAGG) is disordered. 9 LRR repeats span residues 97-118 (NSGILSLSGRKLREFPGSGYDL), 120-141 (DTTQADLSRNRFTEIPSDVWLF), 143-164 (PLETLNLYHNCIKTIPEAIKNL), 166-187 (MLTYLNISRNLLSTLPKYLFDL), 188-209 (PLKVLVVSNNKLVSIPEEIGKL), 211-232 (DLMELDVSCNEIQVLPQQMGKL), 234-256 (SLKELNIRRNNLHVLPDELGDLP), 257-277 (LVKLDFSCNKVTEIPVCYRKL), and 279-300 (HLQVIILDNNPLQVPPAQICLK). Disordered regions lie at residues 324-409 (LDLP…QKDQ), 438-478 (FLKG…LKEV), and 573-633 (KYKS…SRQE). 2 stretches are compositionally biased toward basic and acidic residues: residues 386 to 396 (SNREQTSRNDS) and 440 to 466 (KGKEKSSEKSQKNEEPPNEKKVDKEQL). The span at 594 to 603 (AHMSAQSPVS) shows a compositional bias: polar residues. One can recognise a Calponin-homology (CH) domain in the interval 650-763 (LREEREQIRQ…VTVQALLELP (114 aa)).

Functionally, may play a role in the organization of the cytoskeleton. The protein is Leucine-rich repeat and calponin homology domain-containing protein 2 (Lrch2) of Mus musculus (Mouse).